A 481-amino-acid polypeptide reads, in one-letter code: Proline--tRNA ligase (481 aa).

The protein belongs to the class-II aminoacyl-tRNA synthetase family. ProS type 3 subfamily. As to quaternary structure, homodimer.

It localises to the cytoplasm. It carries out the reaction tRNA(Pro) + L-proline + ATP = L-prolyl-tRNA(Pro) + AMP + diphosphate. Catalyzes the attachment of proline to tRNA(Pro) in a two-step reaction: proline is first activated by ATP to form Pro-AMP and then transferred to the acceptor end of tRNA(Pro). This Saccharolobus islandicus (strain Y.N.15.51 / Yellowstone #2) (Sulfolobus islandicus) protein is Proline--tRNA ligase.